We begin with the raw amino-acid sequence, 173 residues long: Large ribosomal subunit protein uL10 (173 aa).

It belongs to the universal ribosomal protein uL10 family. As to quaternary structure, part of the ribosomal stalk of the 50S ribosomal subunit. The N-terminus interacts with L11 and the large rRNA to form the base of the stalk. The C-terminus forms an elongated spine to which L12 dimers bind in a sequential fashion forming a multimeric L10(L12)X complex.

Functionally, forms part of the ribosomal stalk, playing a central role in the interaction of the ribosome with GTP-bound translation factors. In Micrococcus luteus (strain ATCC 4698 / DSM 20030 / JCM 1464 / CCM 169 / CCUG 5858 / IAM 1056 / NBRC 3333 / NCIMB 9278 / NCTC 2665 / VKM Ac-2230) (Micrococcus lysodeikticus), this protein is Large ribosomal subunit protein uL10.